A 297-amino-acid polypeptide reads, in one-letter code: Bifunctional protein FolD 2 (297 aa).

NADP(+)-binding positions include 177 to 179 (GKS), Ile-202, and Ile-243.

It belongs to the tetrahydrofolate dehydrogenase/cyclohydrolase family. In terms of assembly, homodimer.

The catalysed reaction is (6R)-5,10-methylene-5,6,7,8-tetrahydrofolate + NADP(+) = (6R)-5,10-methenyltetrahydrofolate + NADPH. The enzyme catalyses (6R)-5,10-methenyltetrahydrofolate + H2O = (6R)-10-formyltetrahydrofolate + H(+). It participates in one-carbon metabolism; tetrahydrofolate interconversion. Catalyzes the oxidation of 5,10-methylenetetrahydrofolate to 5,10-methenyltetrahydrofolate and then the hydrolysis of 5,10-methenyltetrahydrofolate to 10-formyltetrahydrofolate. This is Bifunctional protein FolD 2 from Rhizorhabdus wittichii (strain DSM 6014 / CCUG 31198 / JCM 15750 / NBRC 105917 / EY 4224 / RW1) (Sphingomonas wittichii).